A 76-amino-acid chain; its full sequence is uncharacterized protein (76 aa).

This is an uncharacterized protein from Archaeoglobus fulgidus (strain ATCC 49558 / DSM 4304 / JCM 9628 / NBRC 100126 / VC-16).